The sequence spans 275 residues: Ammonia transport outward protein 3 (275 aa).

Residues methionine 1–phenylalanine 84 lie on the Extracellular side of the membrane. Serine 4 bears the Phosphoserine mark. Residues alanine 85–isoleucine 105 traverse the membrane as a helical segment. The Cytoplasmic segment spans residues asparagine 106–serine 120. Residues leucine 121 to glycine 141 traverse the membrane as a helical segment. Topologically, residues aspartate 142–asparagine 181 are extracellular. The helical transmembrane segment at valine 182 to leucine 202 threads the bilayer. Over lysine 203–glycine 207 the chain is Cytoplasmic. The helical transmembrane segment at leucine 208–isoleucine 228 threads the bilayer. Residues aspartate 229–alanine 236 lie on the Extracellular side of the membrane. Residues glycine 237–valine 257 traverse the membrane as a helical segment. Topologically, residues serine 258–proline 275 are cytoplasmic.

The protein belongs to the acetate uptake transporter (AceTr) (TC 2.A.96) family.

The protein localises to the cell membrane. In terms of biological role, transporter protein required for ammonia export. Induced in rho(0) cells, probably to eliminate the excess ammonia that arises because of a potential defect in ammonia assimilation in those cells. The protein is Ammonia transport outward protein 3 (ATO3) of Saccharomyces cerevisiae (strain ATCC 204508 / S288c) (Baker's yeast).